The chain runs to 340 residues: Delta-aminolevulinic acid dehydratase (340 aa).

Zn(2+) contacts are provided by C133, C135, and C143. The Schiff-base intermediate with substrate role is filled by K210. 5-aminolevulinate-binding residues include R220 and R232. K263 acts as the Schiff-base intermediate with substrate in catalysis. Residues S290 and Y329 each contribute to the 5-aminolevulinate site.

This sequence belongs to the ALAD family. Homooctamer. The cofactor is Zn(2+).

The enzyme catalyses 2 5-aminolevulinate = porphobilinogen + 2 H2O + H(+). Its pathway is porphyrin-containing compound metabolism; protoporphyrin-IX biosynthesis; coproporphyrinogen-III from 5-aminolevulinate: step 1/4. Catalyzes an early step in the biosynthesis of tetrapyrroles. Binds two molecules of 5-aminolevulinate per subunit, each at a distinct site, and catalyzes their condensation to form porphobilinogen. In Candida glabrata (strain ATCC 2001 / BCRC 20586 / JCM 3761 / NBRC 0622 / NRRL Y-65 / CBS 138) (Yeast), this protein is Delta-aminolevulinic acid dehydratase (HEM2).